Here is a 502-residue protein sequence, read N- to C-terminus: Reduced meiotic recombination protein C1442.04c (502 aa).

3 positions are modified to phosphoserine: Ser328, Ser330, and Ser331. Disordered regions lie at residues 353–391 (NDLN…LRDN), 420–440 (GSLN…ENVD), and 454–502 (ESAF…PSDD). Residues 367–378 (DGSEIITLDEND) are compositionally biased toward acidic residues. Polar residues-rich tracts occupy residues 420 to 436 (GSLN…TNDG) and 462 to 477 (GTIN…TTDT).

Belongs to the RMR1 family.

It is found in the cytoplasm. The protein localises to the nucleus. Its function is as follows. Required for normal levels of gene conversion events during meiosis. In Schizosaccharomyces pombe (strain 972 / ATCC 24843) (Fission yeast), this protein is Reduced meiotic recombination protein C1442.04c.